Consider the following 381-residue polypeptide: Deoxyguanosinetriphosphate triphosphohydrolase-like protein (381 aa).

The HD domain maps to 76–203 (RMTHTLEVAG…ADLSDEIAYT (128 aa)).

Belongs to the dGTPase family. Type 2 subfamily.

In Leptospira borgpetersenii serovar Hardjo-bovis (strain JB197), this protein is Deoxyguanosinetriphosphate triphosphohydrolase-like protein.